Consider the following 93-residue polypeptide: Small ribosomal subunit protein uS19 (93 aa).

It belongs to the universal ribosomal protein uS19 family.

In terms of biological role, protein S19 forms a complex with S13 that binds strongly to the 16S ribosomal RNA. This chain is Small ribosomal subunit protein uS19, found in Clostridium perfringens (strain ATCC 13124 / DSM 756 / JCM 1290 / NCIMB 6125 / NCTC 8237 / Type A).